A 485-amino-acid chain; its full sequence is UDP-N-acetylmuramoyl-L-alanyl-D-glutamate--2,6-diaminopimelate ligase (485 aa).

A UDP-N-acetyl-alpha-D-muramoyl-L-alanyl-D-glutamate-binding site is contributed by S32. G111 to T117 is a binding site for ATP. Residues T153–T154, S180, and R188 contribute to the UDP-N-acetyl-alpha-D-muramoyl-L-alanyl-D-glutamate site. At K220 the chain carries N6-carboxylysine. Meso-2,6-diaminopimelate-binding positions include R382, D405–R408, G455, and E459. A Meso-diaminopimelate recognition motif motif is present at residues D405 to R408.

Belongs to the MurCDEF family. MurE subfamily. The cofactor is Mg(2+). In terms of processing, carboxylation is probably crucial for Mg(2+) binding and, consequently, for the gamma-phosphate positioning of ATP.

The protein localises to the cytoplasm. It catalyses the reaction UDP-N-acetyl-alpha-D-muramoyl-L-alanyl-D-glutamate + meso-2,6-diaminopimelate + ATP = UDP-N-acetyl-alpha-D-muramoyl-L-alanyl-gamma-D-glutamyl-meso-2,6-diaminopimelate + ADP + phosphate + H(+). It functions in the pathway cell wall biogenesis; peptidoglycan biosynthesis. Its function is as follows. Catalyzes the addition of meso-diaminopimelic acid to the nucleotide precursor UDP-N-acetylmuramoyl-L-alanyl-D-glutamate (UMAG) in the biosynthesis of bacterial cell-wall peptidoglycan. The protein is UDP-N-acetylmuramoyl-L-alanyl-D-glutamate--2,6-diaminopimelate ligase of Chlamydia felis (strain Fe/C-56) (Chlamydophila felis).